We begin with the raw amino-acid sequence, 187 residues long: Elongation factor P (187 aa).

The protein belongs to the elongation factor P family.

The protein localises to the cytoplasm. Its pathway is protein biosynthesis; polypeptide chain elongation. Involved in peptide bond synthesis. Stimulates efficient translation and peptide-bond synthesis on native or reconstituted 70S ribosomes in vitro. Probably functions indirectly by altering the affinity of the ribosome for aminoacyl-tRNA, thus increasing their reactivity as acceptors for peptidyl transferase. The polypeptide is Elongation factor P (Corynebacterium glutamicum (strain R)).